A 235-amino-acid chain; its full sequence is Orotidine 5'-phosphate decarboxylase (235 aa).

Residues Asp-9, Lys-31, 58-67 (DLKFHDIPNT), Thr-121, Arg-180, Gln-190, Gly-210, and Arg-211 each bind substrate. Residue Lys-60 is the Proton donor of the active site.

It belongs to the OMP decarboxylase family. Type 1 subfamily. As to quaternary structure, homodimer.

The catalysed reaction is orotidine 5'-phosphate + H(+) = UMP + CO2. Its pathway is pyrimidine metabolism; UMP biosynthesis via de novo pathway; UMP from orotate: step 2/2. Its function is as follows. Catalyzes the decarboxylation of orotidine 5'-monophosphate (OMP) to uridine 5'-monophosphate (UMP). This Nitratidesulfovibrio vulgaris (strain ATCC 29579 / DSM 644 / CCUG 34227 / NCIMB 8303 / VKM B-1760 / Hildenborough) (Desulfovibrio vulgaris) protein is Orotidine 5'-phosphate decarboxylase.